The sequence spans 197 residues: Na(+)-translocating NADH-quinone reductase subunit E (197 aa).

A run of 6 helical transmembrane segments spans residues 11-31 (SVFI…FLAV), 35-55 (VSTA…SVPV), 76-96 (FLKF…LEMF), 108-128 (LGIY…VSFM), 139-159 (VVYG…LAGI), and 175-195 (LGIT…FSGI).

Belongs to the NqrDE/RnfAE family. As to quaternary structure, composed of six subunits; NqrA, NqrB, NqrC, NqrD, NqrE and NqrF.

It is found in the cell inner membrane. It catalyses the reaction a ubiquinone + n Na(+)(in) + NADH + H(+) = a ubiquinol + n Na(+)(out) + NAD(+). Its function is as follows. NQR complex catalyzes the reduction of ubiquinone-1 to ubiquinol by two successive reactions, coupled with the transport of Na(+) ions from the cytoplasm to the periplasm. NqrA to NqrE are probably involved in the second step, the conversion of ubisemiquinone to ubiquinol. This is Na(+)-translocating NADH-quinone reductase subunit E from Neisseria meningitidis serogroup B (strain ATCC BAA-335 / MC58).